Here is a 1010-residue protein sequence, read N- to C-terminus: Eukaryotic translation initiation factor 4E transporter (1010 aa).

Positions 10-16 (YSKVDLL) match the YXXXXLphi motif motif. Disordered regions lie at residues 154 to 182 (GSNS…RKGS), 196 to 277 (PDHD…RLVE), 289 to 320 (YDSK…SKRG), 354 to 391 (NEER…SNDS), and 921 to 960 (QSNP…ERIS). Residues 201 to 211 (CMSSSPTFSTS) show a composition bias toward polar residues. Residues 227 to 247 (DNWDYKNEKTVEASIENEKET) show a composition bias toward basic and acidic residues. Positions 248–263 (SPNGSGSTSSLNQHNQ) are enriched in polar residues. 2 stretches are compositionally biased toward basic and acidic residues: residues 354–364 (NEERSVTEDKN) and 372–384 (KNLD…DEAS). Over residues 934 to 953 (SDSSDSGNVIKANSLTSPSY) the composition is skewed to polar residues.

The protein belongs to the 4E-T/EIF4E-T family. As to quaternary structure, interacts (via YXXXXLphi motif) with eIF4E1. Interacts with DDX6/me31B. Expressed in all larval and adult organs and tissues, with highest levels in the ovary.

The protein resides in the cytoplasm. The protein localises to the P-body. It is found in the nucleus. Its function is as follows. eIF4E1-binding protein that regulates translation and stability of mRNAs in processing bodies (P-bodies). Probably plays a role in P-bodies to coordinate the storage of translationally inactive mRNAs in the cytoplasm and prevent their degradation. Acts as a binding platform for multiple RNA-binding proteins. Required for the formation of P-bodies. The protein is Eukaryotic translation initiation factor 4E transporter of Drosophila melanogaster (Fruit fly).